We begin with the raw amino-acid sequence, 325 residues long: Pyruvate dehydrogenase E1 component subunit beta (325 aa).

Glu-60 contributes to the thiamine diphosphate binding site.

As to quaternary structure, heterodimer of an alpha and a beta chain. Thiamine diphosphate serves as cofactor.

It catalyses the reaction N(6)-[(R)-lipoyl]-L-lysyl-[protein] + pyruvate + H(+) = N(6)-[(R)-S(8)-acetyldihydrolipoyl]-L-lysyl-[protein] + CO2. Its function is as follows. The pyruvate dehydrogenase complex catalyzes the overall conversion of pyruvate to acetyl-CoA and CO(2). It contains multiple copies of three enzymatic components: pyruvate dehydrogenase (E1), dihydrolipoamide acetyltransferase (E2) and lipoamide dehydrogenase (E3). This chain is Pyruvate dehydrogenase E1 component subunit beta (pdhB), found in Staphylococcus aureus (strain Mu50 / ATCC 700699).